A 428-amino-acid chain; its full sequence is Trigger factor (428 aa).

Positions 163-248 (GDTVVIDFEG…VHEVKAKQLP (86 aa)) constitute a PPIase FKBP-type domain.

Belongs to the FKBP-type PPIase family. Tig subfamily.

The protein resides in the cytoplasm. The enzyme catalyses [protein]-peptidylproline (omega=180) = [protein]-peptidylproline (omega=0). Involved in protein export. Acts as a chaperone by maintaining the newly synthesized protein in an open conformation. Functions as a peptidyl-prolyl cis-trans isomerase. The sequence is that of Trigger factor from Geobacillus kaustophilus (strain HTA426).